A 233-amino-acid polypeptide reads, in one-letter code: Probable 2-phosphosulfolactate phosphatase (233 aa).

It belongs to the ComB family. The cofactor is Mg(2+).

The enzyme catalyses (2R)-O-phospho-3-sulfolactate + H2O = (2R)-3-sulfolactate + phosphate. In Symbiobacterium thermophilum (strain DSM 24528 / JCM 14929 / IAM 14863 / T), this protein is Probable 2-phosphosulfolactate phosphatase.